A 378-amino-acid polypeptide reads, in one-letter code: Circumsporozoite protein (378 aa).

The signal sequence occupies residues 1-22 (MKNFNLLVVSSILLVDLFPTNC). Residues 50–288 (AQVRQSASRG…AGAGQGQNNE (239 aa)) are disordered. Basic and acidic residues predominate over residues 65-93 (NPKDEEGADKPKKKEEKKVEPKKPRENKL). The required for the binding to heparan sulfate proteoglycans (HSPGs) on the surface of host hepatocytes stretch occupies residues 81–89 (KKVEPKKPR). Residues 92 to 96 (KLKQP) form a region I; contains the proteolytic cleavage site region. The segment covering 96-203 (PPAGDGAPEG…RAGGQPAAGG (108 aa)) has biased composition (low complexity). The stretch at 97–102 (PAGDGA) is one 1-1; truncated repeat. The interval 97–191 (PAGDGAPEGD…AAPAGDGAPA (95 aa)) is 11 X 9 AA tandem repeats of P-[AE]-G-D-G-A-P-A-[AG]. Tandem repeats lie at residues 103–111 (PEGDGAPAA), 112–120 (PAGDGAPAA), 121–129 (PAGDGAPAA), 130–138 (PAGDGAPAA), 139–147 (PAGDGAPAA), 148–156 (PAGDGAPAA), 157–165 (PAGDGAPAA), 166–174 (PAGDGAPAA), 175–183 (PAGDGAPAA), 184–191 (PAGDGAPA), 193–208 (NRAG…QAGG), 209–224 (NRAG…QAGG), and 225–240 (NRAG…QAGG). The segment at 193-268 (NRAGGQPAAG…GAQAGGANAG (76 aa)) is 6 X 16 AA approximate tandem repeats of N-R-A-G-G-Q-P-A-A-G-G-N-Q-A-G-G. A compositionally biased stretch (low complexity) spans 228–251 (GGQPAAGGNQAGGQPAAGGNQAGA). One copy of the 2-4; approximate; truncated repeat lies at 241 to 251 (QPAAGGNQAGA). A 2-5; approximate; truncated repeat occupies 252–260 (QAGGNQAGA). 2 stretches are compositionally biased toward gly residues: residues 252-266 (QAGG…GGAN) and 274-283 (EAGGNAGAGQ). A 2-6; approximate; truncated repeat occupies 261–268 (QAGGANAG). In terms of domain architecture, TSP type-1 spans 304 to 356 (KIRSTLGVEWSPCSVTCGKGVRMRRKVSAANKKPEELDVNDLETEVCTMDKCA). 2 disulfide bridges follow: cysteine 316–cysteine 350 and cysteine 320–cysteine 355. Threonine 319 carries O-linked (Fuc) threonine glycosylation. Cysteine 355 carries the GPI-anchor amidated cysteine lipid modification. Positions 356-378 (AGIFNVVSNSLRLVILLVLALFN) are cleaved as a propeptide — removed in mature form.

The protein belongs to the plasmodium circumsporozoite protein family. Post-translationally, during host cell invasion, proteolytically cleaved at the cell membrane in the region I by a papain-like cysteine protease of parasite origin. Cleavage is triggered by the sporozoite contact with highly sulfated heparan sulfate proteoglycans (HSPGs) present on the host hepatocyte cell surface. Cleavage exposes the TSP type-1 (TSR) domain and is required for productive invasion of host hepatocytes but not for adhesion to the host cell membrane. Cleavage is dispensable for sporozoite development in the oocyst, motility and for traversal of host and vector cells. In terms of processing, O-glycosylated; maybe by POFUT2.

The protein localises to the cell membrane. The protein resides in the cytoplasm. Essential sporozoite protein. In the mosquito vector, required for sporozoite development in the oocyst, migration through the vector hemolymph and entry into the vector salivary glands. In the vertebrate host, required for sporozoite migration through the host dermis and infection of host hepatocytes. Binds to highly sulfated heparan sulfate proteoglycans (HSPGs) on the surface of host hepatocytes. Its function is as follows. In the vertebrate host, binds to highly sulfated heparan sulfate proteoglycans (HSPGs) on the surface of host hepatocytes and is required for sporozoite invasion of the host hepatocytes. In Plasmodium cynomolgi (strain Berok), this protein is Circumsporozoite protein.